Reading from the N-terminus, the 405-residue chain is Phosphatidylinositol 5-phosphate 4-kinase type-2 alpha (405 aa).

Residues 32 to 404 (ASDPLLSVLM…RFLDFIANIL (373 aa)) form the PIPK domain. The interval 287–326 (QEEVECEENDGEDEGESDGTHPIGTPPDSPGNTLNSSLPL) is disordered. A compositionally biased stretch (acidic residues) spans 288–303 (EEVECEENDGEDEGES).

In terms of assembly, homodimer. Phosphorylated in tyrosines. Phosphorylation is induced by light and increases kinase activity.

The protein localises to the cell membrane. It is found in the nucleus. The protein resides in the lysosome. Its subcellular location is the cytoplasm. The enzyme catalyses a 1,2-diacyl-sn-glycero-3-phospho-(1D-myo-inositol-5-phosphate) + ATP = a 1,2-diacyl-sn-glycero-3-phospho-(1D-myo-inositol-4,5-bisphosphate) + ADP + H(+). It catalyses the reaction 1,2-dihexadecanoyl-sn-glycero-3-phospho-(1D-myo-inositol-5-phosphate) + ATP = 1,2-dihexadecanoyl-sn-glycero-3-phospho-(1D-myo-inositol-4,5-bisphosphate) + ADP + H(+). The catalysed reaction is 1,2-dihexadecanoyl-sn-glycero-3-phospho-(1D-myo-inositol-5-phosphate) + GTP = 1,2-dihexadecanoyl-sn-glycero-3-phospho-(1D-myo-inositol-4,5-bisphosphate) + GDP + H(+). In rod outer segments, activated by light. Its function is as follows. Catalyzes the phosphorylation of phosphatidylinositol 5-phosphate (PtdIns5P) on the fourth hydroxyl of the myo-inositol ring, to form phosphatidylinositol 4,5-bisphosphate (PtdIns(4,5)P2). Has both ATP- and GTP-dependent kinase activities. The chain is Phosphatidylinositol 5-phosphate 4-kinase type-2 alpha (PIP4K2A) from Gallus gallus (Chicken).